The following is a 454-amino-acid chain: MDHEAAQLEKQHVHNVYESTAPYFSDLQSKAWPRVRQFLQEQKPGSLIADIGCGTGKYLKVNSQVHTVGCDYCGPLVEIARNRGCEAMVCDNLNLPFRDEGFDAIISIGVIHHFSTKQRRIRAIKEMARVLVPGGQLMIYVWAMEQKNRHFEKQDVLVPWNRALCSQLFSESSQSGRKRQCGYPERGHPYHPPCSECSCSVCFKEQCGSKRSHSVGYEPAMARTCFANISKEGEEEYGFYSTLGKSFRSWFFSRSLDESTLRKQIERVRPLKNTEVWASSTVTVQPSRHSSLDFDHQEPFSTKGQSLDEEVFVESSSGKHLEWLRAPGTLKHLNGDHQGEMRRNGGGNFLDSTNTGVNCVDAGNIEDDNPSASKILRRISAVDSTDFNPDDTMSVEDPQTDVLDSTAFMRYYHVFREGELCSLLKENVSELRILSSGNDHGNWCIIAEKKRGCD.

Ser214 carries the post-translational modification Phosphoserine.

The protein belongs to the methyltransferase superfamily. As to expression, down-regulated in breast, bladder, colorectal, cervix and testicular carcinomas.

May modify wobble uridines in specific arginine and glutamic acid tRNAs. Acts as a tumor suppressor by promoting the expression of LIN9. The protein is Probable tRNA methyltransferase 9B of Homo sapiens (Human).